Here is a 1407-residue protein sequence, read N- to C-terminus: DNA-directed RNA polymerase subunit beta' (1407 aa).

Zn(2+)-binding residues include Cys-70, Cys-72, Cys-85, and Cys-88. Mg(2+) contacts are provided by Asp-460, Asp-462, and Asp-464. 4 residues coordinate Zn(2+): Cys-814, Cys-888, Cys-895, and Cys-898.

It belongs to the RNA polymerase beta' chain family. As to quaternary structure, the RNAP catalytic core consists of 2 alpha, 1 beta, 1 beta' and 1 omega subunit. When a sigma factor is associated with the core the holoenzyme is formed, which can initiate transcription. It depends on Mg(2+) as a cofactor. Requires Zn(2+) as cofactor.

The catalysed reaction is RNA(n) + a ribonucleoside 5'-triphosphate = RNA(n+1) + diphosphate. Functionally, DNA-dependent RNA polymerase catalyzes the transcription of DNA into RNA using the four ribonucleoside triphosphates as substrates. The chain is DNA-directed RNA polymerase subunit beta' from Cronobacter sakazakii (strain ATCC BAA-894) (Enterobacter sakazakii).